The chain runs to 482 residues: C3a anaphylatoxin chemotactic receptor (482 aa).

The Extracellular portion of the chain corresponds to 1 to 23 (MASFSAETNSTDLLSQPWNEPPV). N-linked (GlcNAc...) asparagine glycosylation is present at N9. The chain crosses the membrane as a helical span at residues 24–46 (ILSMVILSLTFLLGLPGNGLVLW). The Cytoplasmic segment spans residues 47–57 (VAGLKMQRTVN). Residues 58–80 (TVWFLHLTLADLLCCLSLPFSLA) form a helical membrane-spanning segment. Residues 81–96 (HLALQGQWPYGRFLCE) lie on the Extracellular side of the membrane. C95 and C172 form a disulfide bridge. The helical transmembrane segment at 97–118 (LIPSIIVLNMFASVFLLTAISL) threads the bilayer. Topologically, residues 119–139 (DRCLVVFKPIWCQNHRNVGTA) are cytoplasmic. The chain crosses the membrane as a helical span at residues 140–160 (CSICGCIWVVAFVMCIPVFVY). The Extracellular portion of the chain corresponds to 161 to 340 (REIFTADNHN…TPLVAITITR (180 aa)). 2 positions are modified to sulfotyrosine: Y174 and Y184. N194 carries an N-linked (GlcNAc...) asparagine glycan. Y318 is subject to Sulfotyrosine. Residues 341 to 360 (LVVGFLLPSVIMIACYSFIV) traverse the membrane as a helical segment. Over 361 to 377 (FRMQRGRFAKSQSKTFR) the chain is Cytoplasmic. Residues 378–400 (VAVVVVAVFLVCWTPYHIFGVLS) traverse the membrane as a helical segment. The Extracellular segment spans residues 401–417 (LLIDPESPLGKTLMSWD). The chain crosses the membrane as a helical span at residues 418–438 (HVSIALASANSCFNPFLYALL). Over 439-482 (GKDFRKKARQSIQGILEAAFSEELTRSTHCNSNNVFSERNSTTV) the chain is Cytoplasmic. The residue at position 459 (S459) is a Phosphoserine. Position 463 is a phosphothreonine (T463).

It belongs to the G-protein coupled receptor 1 family. In terms of assembly, interacts with VGF-derived peptide TLQP-21. Post-translationally, among the sulfation sites Tyr-174 is essential for binding of C3a anaphylatoxin.

Its subcellular location is the cell membrane. In terms of biological role, receptor for the chemotactic and inflammatory peptide anaphylatoxin C3a. This receptor stimulates chemotaxis, granule enzyme release and superoxide anion production. The chain is C3a anaphylatoxin chemotactic receptor (C3AR1) from Pongo abelii (Sumatran orangutan).